A 547-amino-acid polypeptide reads, in one-letter code: Undecaprenyl phosphate-alpha-4-amino-4-deoxy-L-arabinose arabinosyl transferase (547 aa).

10 helical membrane passes run 83–103, 111–131, 174–194, 205–225, 253–273, 286–306, 311–331, 346–366, 378–398, and 408–428; these read FASA…ALQL, FLAS…TYSV, FLTK…PYVI, FGPL…IAVH, APFW…LGLL, ISPE…FFSI, LLTY…ANAV, AWLN…LAFS, GALA…FIQL, and SALC…QSLI.

It belongs to the glycosyltransferase 83 family.

The protein resides in the cell inner membrane. The catalysed reaction is 4-amino-4-deoxy-alpha-L-arabinopyranosyl di-trans,octa-cis-undecaprenyl phosphate + lipid IVA = lipid IIA + di-trans,octa-cis-undecaprenyl phosphate.. The protein operates within lipopolysaccharide metabolism; 4-amino-4-deoxy-beta-L-arabinose-lipid A biosynthesis. Its function is as follows. Catalyzes the transfer of the L-Ara4N moiety of the glycolipid undecaprenyl phosphate-alpha-L-Ara4N to lipid A. The modified arabinose is attached to lipid A and is required for resistance to polymyxin and cationic antimicrobial peptides. This is Undecaprenyl phosphate-alpha-4-amino-4-deoxy-L-arabinose arabinosyl transferase from Aeromonas hydrophila subsp. hydrophila (strain ATCC 7966 / DSM 30187 / BCRC 13018 / CCUG 14551 / JCM 1027 / KCTC 2358 / NCIMB 9240 / NCTC 8049).